We begin with the raw amino-acid sequence, 513 residues long: Noroxomaritidine synthase 2 (513 aa).

Residues 14 to 34 traverse the membrane as a helical segment; it reads HYPEILIAIACFLIFSLLLSA. Cys-458 serves as a coordination point for heme.

This sequence belongs to the cytochrome P450 family. Requires heme as cofactor. As to expression, mostly expressed in stems, and, to a lower extent, in bulbs, roots, leaves and flowers.

Its subcellular location is the membrane. It carries out the reaction 4'-O-methylnorbelladine + reduced [NADPH--hemoprotein reductase] + O2 = (10bR,4aS)-noroxomaritidine + oxidized [NADPH--hemoprotein reductase] + 2 H2O + H(+). The catalysed reaction is 4'-O-methylnorbelladine + reduced [NADPH--hemoprotein reductase] + O2 = (10bS,4aR)-noroxomaritidine + oxidized [NADPH--hemoprotein reductase] + 2 H2O + H(+). It functions in the pathway alkaloid biosynthesis. Functionally, cytochrome P450 that catalyzes an intramolecular para-para' C-C phenol coupling of 4'-O-methylnorbelladine in alkaloids biosynthesis, including haemanthamine- and crinamine-type alkaloids, promising anticancer agents. Catalyzes the formation of (10bR,4aS)-noroxomaritidine and (10bS,4aR)-noroxomaritidine from 4'-O-methylnorbelladine. The polypeptide is Noroxomaritidine synthase 2 (Narcissus pseudonarcissus (Daffodil)).